A 63-amino-acid chain; its full sequence is uncharacterized protein (63 aa).

Residues 1-17 show a composition bias toward basic and acidic residues; that stretch reads MRYTDSRKLTPETDANH. The tract at residues 1-32 is disordered; that stretch reads MRYTDSRKLTPETDANHKTASPQPIRRISSQT. The segment covering 18–32 has biased composition (polar residues); it reads KTASPQPIRRISSQT.

This sequence to Y.enterocolitica HemP.

This is an uncharacterized protein from Escherichia coli (strain K12).